The following is an 833-amino-acid chain: DNA gyrase subunit A (833 aa).

One can recognise a Topo IIA-type catalytic domain in the interval Leu34–Ile500. Residue Tyr122 is the O-(5'-phospho-DNA)-tyrosine intermediate of the active site. Residues Gln527–Gly533 carry the GyrA-box motif.

The protein belongs to the type II topoisomerase GyrA/ParC subunit family. Heterotetramer, composed of two GyrA and two GyrB chains. In the heterotetramer, GyrA contains the active site tyrosine that forms a transient covalent intermediate with DNA, while GyrB binds cofactors and catalyzes ATP hydrolysis.

The protein resides in the cytoplasm. It carries out the reaction ATP-dependent breakage, passage and rejoining of double-stranded DNA.. A type II topoisomerase that negatively supercoils closed circular double-stranded (ds) DNA in an ATP-dependent manner to modulate DNA topology and maintain chromosomes in an underwound state. Negative supercoiling favors strand separation, and DNA replication, transcription, recombination and repair, all of which involve strand separation. Also able to catalyze the interconversion of other topological isomers of dsDNA rings, including catenanes and knotted rings. Type II topoisomerases break and join 2 DNA strands simultaneously in an ATP-dependent manner. The protein is DNA gyrase subunit A of Chlamydia muridarum (strain MoPn / Nigg).